A 502-amino-acid chain; its full sequence is Intracellular exo-alpha-(1-&gt;5)-L-arabinofuranosidase (502 aa).

Alpha-L-arabinofuranose-binding residues include Glu-29, Asn-74, and Asn-174. Glu-175 (proton donor/acceptor) is an active-site residue. The alpha-L-arabinofuranose site is built by Tyr-246, Glu-294, and Gln-351. Glu-294 (nucleophile) is an active-site residue.

Belongs to the glycosyl hydrolase 51 family. In terms of assembly, homohexamer; trimer of dimers.

The protein resides in the cytoplasm. The catalysed reaction is Hydrolysis of terminal non-reducing alpha-L-arabinofuranoside residues in alpha-L-arabinosides.. The protein operates within glycan metabolism; L-arabinan degradation. With respect to regulation, strongly inhibited by Hg(2+). Involved in the degradation of arabinan and is a key enzyme in the complete degradation of the plant cell wall. Catalyzes the cleavage of terminal alpha-(1-&gt;5)-arabinofuranosyl bonds in different hemicellulosic homopolysaccharides (branched and debranched arabinans). It acts preferentially on aryl-alpha-L-arabinofuranosides, and is much less effective on aryl-beta-D-xylopyranosides. The chain is Intracellular exo-alpha-(1-&gt;5)-L-arabinofuranosidase (abfA) from Geobacillus stearothermophilus (Bacillus stearothermophilus).